The sequence spans 486 residues: MDQGSQTIKGKDRYKSGVMEYRKMGYWEPDYEPKETDVIACFRITPQDGVDPIEAAAAVAGESSTATWTVVWTDRLTAAEKYRAKAYRVDQVPNTDDQYFAYIAYDLDLFENGSIANLTASIIGNVFGFKPLKGLRLEDMRLPTAYVKTFQGPATGIVVERERLDKFGRPLLGATVKPKLGLSGRNYGRVVYEALKGGLDFTKDDENINSQPFMDWRERFLYCMEAVNKAQAATGEIKGTYLNVTAATMEDMYERAEFARDLGSNIIMIDLVIGWTAMQSMAKWARRNNMILHLHRAGHSTYTRQKTHGVSFRVIAKWARLAGVDHIHAGTVVGKLEGDPATTKGYYDICRDEFTHRKLENGIFFDQPWASLNKMMPVASGGIHAGQMHQLLDLLGDDTVLQFGGGTIGHPMGIAAGATANRVALECMVLARNEGRDIVNEGPEILQEAARSCTPLQQALETWKDVTFNYTSTDSPDYAVTATASV.

Substrate is bound by residues Asn-125 and Thr-175. Lys-177 serves as the catalytic Proton acceptor. Lys-179 serves as a coordination point for substrate. Mg(2+)-binding residues include Lys-203, Asp-205, and Glu-206. Residue Lys-203 is modified to N6-carboxylysine. His-295 serves as the catalytic Proton acceptor. Residues Arg-296, His-328, and Ser-380 each contribute to the substrate site.

Belongs to the RuBisCO large chain family. Type I subfamily. In terms of assembly, heterohexadecamer of 8 large chains and 8 small chains. Requires Mg(2+) as cofactor.

The catalysed reaction is 2 (2R)-3-phosphoglycerate + 2 H(+) = D-ribulose 1,5-bisphosphate + CO2 + H2O. It catalyses the reaction D-ribulose 1,5-bisphosphate + O2 = 2-phosphoglycolate + (2R)-3-phosphoglycerate + 2 H(+). Its function is as follows. RuBisCO catalyzes two reactions: the carboxylation of D-ribulose 1,5-bisphosphate, the primary event in carbon dioxide fixation, as well as the oxidative fragmentation of the pentose substrate. Both reactions occur simultaneously and in competition at the same active site. In Aurantimonas manganoxydans (strain ATCC BAA-1229 / DSM 21871 / SI85-9A1), this protein is Ribulose bisphosphate carboxylase large chain.